A 361-amino-acid polypeptide reads, in one-letter code: Peptide chain release factor 1 (361 aa).

Gln-237 is modified (N5-methylglutamine). Residues Ala-286 to Ser-306 are disordered.

Belongs to the prokaryotic/mitochondrial release factor family. Methylated by PrmC. Methylation increases the termination efficiency of RF1.

The protein localises to the cytoplasm. Its function is as follows. Peptide chain release factor 1 directs the termination of translation in response to the peptide chain termination codons UAG and UAA. This chain is Peptide chain release factor 1, found in Coxiella burnetii (strain CbuG_Q212) (Coxiella burnetii (strain Q212)).